The following is a 243-amino-acid chain: Uroporphyrinogen-III C-methyltransferase (243 aa).

S-adenosyl-L-homocysteine contacts are provided by residues P12, 88–90, 118–119, M166, and A195; these read SGD and ST.

This sequence belongs to the precorrin methyltransferase family.

It catalyses the reaction uroporphyrinogen III + 2 S-adenosyl-L-methionine = precorrin-2 + 2 S-adenosyl-L-homocysteine + H(+). Its pathway is cofactor biosynthesis; adenosylcobalamin biosynthesis; precorrin-2 from uroporphyrinogen III: step 1/1. The protein operates within porphyrin-containing compound metabolism; siroheme biosynthesis; precorrin-2 from uroporphyrinogen III: step 1/1. Catalyzes the two successive C-2 and C-7 methylation reactions involved in the conversion of uroporphyrinogen III to precorrin-2 via the intermediate formation of precorrin-1. It is a step in the biosynthesis of both cobalamin (vitamin B12) and siroheme. This Synechococcus elongatus (strain ATCC 33912 / PCC 7942 / FACHB-805) (Anacystis nidulans R2) protein is Uroporphyrinogen-III C-methyltransferase.